A 208-amino-acid polypeptide reads, in one-letter code: Outer-membrane lipoprotein carrier protein (208 aa).

A signal peptide spans 1–24; the sequence is MRMNIVQKILSATCFALLPLLAHA.

This sequence belongs to the LolA family. In terms of assembly, monomer.

The protein resides in the periplasm. Functionally, participates in the translocation of lipoproteins from the inner membrane to the outer membrane. Only forms a complex with a lipoprotein if the residue after the N-terminal Cys is not an aspartate (The Asp acts as a targeting signal to indicate that the lipoprotein should stay in the inner membrane). In Dechloromonas aromatica (strain RCB), this protein is Outer-membrane lipoprotein carrier protein.